A 162-amino-acid chain; its full sequence is MNDVVKVGMADLNVVTPPHTIRTAGLGSCVGVVLYDDVKKVAGMAHIMLPDSALGKKQEFNRAKYADTALDLLLSKLEAIGAKRYSLKAKMAGGAQMFSFASNNDMMRIGQRNVEAVKKKLRELSIPILAEDVGGSNGRTIEFNPETKRLSIRTVHQGEKEI.

The protein belongs to the CheD family. Forms a complex with CheC.

The catalysed reaction is L-glutaminyl-[protein] + H2O = L-glutamyl-[protein] + NH4(+). Deamidates glutamine residues to glutamate on methyl-accepting chemotaxis receptors (MCPs). CheD-mediated MCP deamidation is required for productive communication of the conformational signals of the chemoreceptors to the CheA kinase. The sequence is that of Chemoreceptor glutamine deamidase CheD from Halalkalibacterium halodurans (strain ATCC BAA-125 / DSM 18197 / FERM 7344 / JCM 9153 / C-125) (Bacillus halodurans).